A 644-amino-acid chain; its full sequence is Phosphatidylinositol polyphosphate 5-phosphatase type IV (644 aa).

A disordered region spans residues 1-193 (MPSKAENLRP…RLPSLLPPRP (193 aa)). Repeat copies occupy residues 10 to 13 (PSEP), 15 to 18 (PQPP), 28 to 31 (PGAP), 39 to 42 (PPDV), 55 to 58 (PATP), 69 to 71 (PIA), 72 to 74 (PRP), and 75 to 78 (PARP). The 13 X 4 AA repeats of P-X-X-P stretch occupies residues 10–242 (PSEPAPQPPE…SLGPGRPRSP (233 aa)). Residues 78-90 (PRLERALSLDDKG) show a composition bias toward basic and acidic residues. Phosphoserine is present on Ser99. Residues 107–118 (NGTSPSRGSVQS) are compositionally biased toward polar residues. Repeat 9 spans residues 121–124 (PGAP). Residues 152–163 (GSPSSGGNPLSG) show a composition bias toward low complexity. Tandem repeats lie at residues 169-172 (PNLP), 183-185 (PRL), 190-193 (PPRP), and 236-239 (PGRP). Residues Ser241 and Ser256 each carry the phosphoserine modification. Cys641 bears the Cysteine methyl ester mark. Residue Cys641 is the site of S-farnesyl cysteine attachment. Residues 642 to 644 (SVS) constitute a propeptide, removed in mature form.

It belongs to the inositol polyphosphate 5-phosphatase family. In terms of assembly, interacts (when prenylated) with PDE6D; this is important for normal location in cilia.

The protein localises to the cytoplasm. It localises to the cytoskeleton. The protein resides in the cilium axoneme. Its subcellular location is the golgi apparatus. It is found in the golgi stack membrane. The protein localises to the cell membrane. It localises to the cell projection. The protein resides in the ruffle. Its subcellular location is the nucleus. The catalysed reaction is a 1,2-diacyl-sn-glycero-3-phospho-(1D-myo-inositol-4,5-bisphosphate) + H2O = a 1,2-diacyl-sn-glycero-3-phospho-(1D-myo-inositol 4-phosphate) + phosphate. It carries out the reaction a 1,2-diacyl-sn-glycero-3-phospho-(1D-myo-inositol-3,4,5-trisphosphate) + H2O = a 1,2-diacyl-sn-glycero-3-phospho-(1D-myo-inositol-3,4-bisphosphate) + phosphate. The enzyme catalyses a 1,2-diacyl-sn-glycero-3-phospho-(1D-myo-inositol-3,5-bisphosphate) + H2O = a 1,2-diacyl-sn-glycero-3-phospho-(1D-myo-inositol-3-phosphate) + phosphate. Functionally, phosphatidylinositol (PtdIns) phosphatase that specifically hydrolyzes the 5-phosphate of phosphatidylinositol-3,4,5-trisphosphate (PtdIns(3,4,5)P3), phosphatidylinositol 4,5-bisphosphate(PtdIns(4,5)P2) and phosphatidylinositol 3,5-bisphosphate (PtdIns(3,5)P2). Specific for lipid substrates, inactive towards water soluble inositol phosphates. Plays an essential role in the primary cilium by controlling ciliary growth and phosphoinositide 3-kinase (PI3K) signaling and stability. In Pan troglodytes (Chimpanzee), this protein is Phosphatidylinositol polyphosphate 5-phosphatase type IV (INPP5E).